The chain runs to 190 residues: Peptide deformylase (190 aa).

Fe cation is bound by residues cysteine 106 and histidine 148. Glutamate 149 is an active-site residue. Residue histidine 152 coordinates Fe cation.

Belongs to the polypeptide deformylase family. Fe(2+) is required as a cofactor.

It carries out the reaction N-terminal N-formyl-L-methionyl-[peptide] + H2O = N-terminal L-methionyl-[peptide] + formate. Removes the formyl group from the N-terminal Met of newly synthesized proteins. Requires at least a dipeptide for an efficient rate of reaction. N-terminal L-methionine is a prerequisite for activity but the enzyme has broad specificity at other positions. The sequence is that of Peptide deformylase from Methylacidiphilum infernorum (isolate V4) (Methylokorus infernorum (strain V4)).